The chain runs to 391 residues: uncharacterized protein (391 aa).

The helical transmembrane segment at 4–24 (FALIVGIVALAIFSFLYIQLY) threads the bilayer.

The protein localises to the membrane. This is an uncharacterized protein from Haemophilus influenzae (strain ATCC 51907 / DSM 11121 / KW20 / Rd).